A 341-amino-acid polypeptide reads, in one-letter code: HTH-type transcriptional repressor PurR (341 aa).

Residues 2 to 56 enclose the HTH lacI-type domain; sequence ATIKDVAKRAGVSTTTVSHVINKTRFVAENTRAAVWAAIKELNYSPSAVARSLKV. A DNA-binding region (H-T-H motif) is located at residues 4 to 23; that stretch reads IKDVAKRAGVSTTTVSHVIN. The DNA-binding element occupies 48 to 56; that stretch reads SAVARSLKV. Residues tyrosine 73, arginine 190, threonine 192, phenylalanine 221, and aspartate 275 each contribute to the hypoxanthine site.

In terms of assembly, homodimer.

It functions in the pathway purine metabolism; purine nucleotide biosynthesis [regulation]. In terms of biological role, is the main repressor of the genes involved in the de novo synthesis of purine nucleotides, regulating purB, purC, purEK, purF, purHD, purL, purMN and guaBA expression. PurR is allosterically activated to bind its cognate DNA by binding the purine corepressors, hypoxanthine or guanine, thereby effecting transcription repression. This Proteus mirabilis (strain HI4320) protein is HTH-type transcriptional repressor PurR.